Reading from the N-terminus, the 74-residue chain is MAKQDAIEMEGTVTESLPNAMFRVDLDNGFNVLAHISGKIRRNYIKILPGDRVKVELTPYDLTKGRITYRLRKK.

In terms of domain architecture, S1-like spans 1–72; sequence MAKQDAIEME…TKGRITYRLR (72 aa).

Belongs to the IF-1 family. As to quaternary structure, component of the 30S ribosomal translation pre-initiation complex which assembles on the 30S ribosome in the order IF-2 and IF-3, IF-1 and N-formylmethionyl-tRNA(fMet); mRNA recruitment can occur at any time during PIC assembly.

It localises to the cytoplasm. One of the essential components for the initiation of protein synthesis. Stabilizes the binding of IF-2 and IF-3 on the 30S subunit to which N-formylmethionyl-tRNA(fMet) subsequently binds. Helps modulate mRNA selection, yielding the 30S pre-initiation complex (PIC). Upon addition of the 50S ribosomal subunit IF-1, IF-2 and IF-3 are released leaving the mature 70S translation initiation complex. The protein is Translation initiation factor IF-1 of Acaryochloris marina (strain MBIC 11017).